We begin with the raw amino-acid sequence, 101 residues long: Venom protein 214 (101 aa).

Residues 1–16 (MIRYVLVIITCFLVAA) form the signal peptide.

In terms of processing, contains 3 disulfide bonds. As to expression, expressed by the venom gland.

It localises to the secreted. The sequence is that of Venom protein 214 from Lychas mucronatus (Chinese swimming scorpion).